The following is a 153-amino-acid chain: Bkd operon transcriptional regulator (153 aa).

The region spanning 4–65 (LDRIDLKILR…RLDEERLSGA (62 aa)) is the HTH asnC-type domain. A DNA-binding region (H-T-H motif) is located at residues 23–42 (WRDLAQKVGLSLTPTLRRVR).

Its function is as follows. Positive regulator of the bkd operon for branched-chain keto acid dehydrogenase complex. This chain is Bkd operon transcriptional regulator (bkdR), found in Pseudomonas aeruginosa (strain ATCC 15692 / DSM 22644 / CIP 104116 / JCM 14847 / LMG 12228 / 1C / PRS 101 / PAO1).